We begin with the raw amino-acid sequence, 225 residues long: Dehydrin DHN4 (225 aa).

Residues 1-78 (MEYQGQQHGR…EDDGMGGRRK (78 aa)) form a disordered region. Gly residues predominate over residues 21–39 (HGVGTGMGTHGGVGTGAAA). 5 tandem repeats follow at residues 105-118 (YGQQ…TGGT), 119-136 (YGQQ…TDGT), 137-159 (YGQQ…TGGT), 160-178 (YGQQ…GTGG), and 179-199 (TYGQ…TGGT). The segment at 105 to 199 (YGQQGTGMAG…GTGMHGTGGT (95 aa)) is 5 X approximate tandem repeats.

Belongs to the plant dehydrin family.

The sequence is that of Dehydrin DHN4 (DHN4) from Hordeum vulgare (Barley).